The sequence spans 386 residues: NADH-ubiquinone oxidoreductase 49 kDa subunit homolog (386 aa).

It belongs to the complex I 49 kDa subunit family.

The protein resides in the mitochondrion. It catalyses the reaction a ubiquinone + NADH + 5 H(+)(in) = a ubiquinol + NAD(+) + 4 H(+)(out). Its function is as follows. Core subunit of the mitochondrial membrane respiratory chain NADH dehydrogenase (Complex I) that is believed to belong to the minimal assembly required for catalysis. Complex I functions in the transfer of electrons from NADH to the respiratory chain. The immediate electron acceptor for the enzyme is believed to be ubiquinone. Component of the iron-sulfur (IP) fragment of the enzyme. Component of the iron-sulfur (IP) fragment of the enzyme. This Trypanosoma brucei brucei protein is NADH-ubiquinone oxidoreductase 49 kDa subunit homolog (NAD7).